We begin with the raw amino-acid sequence, 1104 residues long: Receptor-mediated endocytosis protein 6 (1104 aa).

The 234-residue stretch at 156–389 (LKIAQVVCYL…EMMDSLLVEN (234 aa)) folds into the Ras-GAP domain. Residues 663-682 (SSLAKQPSGMVSSASAQNIP) form a disordered region. Positions 966–1104 (QKKDKLLQSV…SAVEYIKTIL (139 aa)) constitute a VPS9 domain.

Belongs to the GAPVD1 family. In terms of assembly, interacts with GDP-bound rab-5. Interacts with alpha-adaptin.

It is found in the membrane. The protein localises to the cytoplasmic vesicle. It localises to the clathrin-coated vesicle. In terms of biological role, acts both as a GTPase-activating protein (GAP) and a guanine nucleotide exchange factor (GEF), and participates in endocytosis. Acts by regulating the activation of rab-5 by exchanging bound GDP for free GTP at clathrin coated pits. The chain is Receptor-mediated endocytosis protein 6 (rme-6) from Caenorhabditis briggsae.